The sequence spans 1633 residues: Serine-aspartate repeat-containing protein F (1633 aa).

The signal sequence occupies residues 1 to 45; it reads MKKRRQGPINKRVDFLSNKVNKYSIRKFTVGTASILVGATLMFGA. Residues 46–678 are ligand binding A region; that stretch reads ADNEAKAAED…GSSTAQGDNP (633 aa). The segment at 51-269 is disordered; the sequence is KAAEDNQLES…SISTDSSVND (219 aa). The segment covering 61–74 has biased composition (basic and acidic residues); that stretch reads ASKEEQKGSRDNES. Polar residues-rich tracts occupy residues 85–99 and 146–168; these read GSHS…NNAT and PKTS…DNLN. The span at 175 to 184 shows a compositional bias: basic and acidic residues; it reads KESKTDEHST. A compositionally biased stretch (polar residues) spans 186–226; sequence QAQMSTNKSNLDTNDSPTQSEKTSSQANNDSTDNQSAPSKQ. Positions 227–253 are enriched in basic and acidic residues; it reads LDSKPSEQKVYKTKFNDEPTQDVEHTT. Residues 255-266 show a composition bias toward polar residues; the sequence is KLKTPSISTDSS. CNA-B domains follow at residues 679–797, 798–907, 908–1018, and 1019–1129; these read TYSL…YLTP, KYNV…FYKP, IYNL…YKTP, and KYSV…FDDD. Residues 679 to 1129 form a type I collagen binding region region; it reads TYSLGDYVWL…SIDNGYFDDD (451 aa). The segment at 862–889 is disordered; the sequence is FETPEGYTPTKQNSGSDEGKDSNGTKTT. The segment at 1085-1608 is disordered; it reads KPEGMTQTTA…ANEDHDSKGT (524 aa). A compositionally biased stretch (basic and acidic residues) spans 1107–1119; sequence EDVRVTITDHDDF. Over residues 1125 to 1584 the composition is skewed to acidic residues; the sequence is YFDDDSDSDS…DSDSDSDSDS (460 aa). Residues 1585-1606 show a composition bias toward basic and acidic residues; that stretch reads DSDKNAKDKLPDTGANEDHDSK. The LPXTG sorting signal signature appears at 1594-1598; sequence LPDTG. The residue at position 1597 (Thr1597) is a Pentaglycyl murein peptidoglycan amidated threonine. Positions 1598 to 1633 are cleaved as a propeptide — removed by sortase; that stretch reads GANEDHDSKGTLLGTLFAGLGALLLGRRRKKDNKEK.

It belongs to the serine-aspartate repeat-containing protein (SDr) family.

It localises to the secreted. The protein resides in the cell wall. Functionally, binds to type I collagen via alpha-2(I) or alpha-1(I) chains. The protein is Serine-aspartate repeat-containing protein F (sdrF) of Staphylococcus epidermidis (strain ATCC 12228 / FDA PCI 1200).